A 187-amino-acid polypeptide reads, in one-letter code: Large ribosomal subunit protein uL22 (187 aa).

Residues 159–171 (VSKPTDDAAPKVK) show a composition bias toward basic and acidic residues. A disordered region spans residues 159–187 (VSKPTDDAAPKVKKESKRKQRRQLARGEF). A compositionally biased stretch (basic residues) spans 172-187 (KESKRKQRRQLARGEF).

It belongs to the universal ribosomal protein uL22 family.

In Caenorhabditis elegans, this protein is Large ribosomal subunit protein uL22 (rpl-17).